The following is a 608-amino-acid chain: Zinc finger protein 652 (608 aa).

Phosphoserine is present on S57. The interval 61–232 (VLADTKMSKP…KRATKEAKAP (172 aa)) is disordered. Residues 71 to 97 (HLHETEEQPYFREPRAVSDVHTVKEDR) show a composition bias toward basic and acidic residues. Composition is skewed to acidic residues over residues 98–108 (ENSDDTEEEEE) and 151–162 (EEDEEETEEEAT). S100 is subject to Phosphoserine. T103 is subject to Phosphothreonine. The segment covering 194–208 (AASAAAATTSPAPRT) has biased composition (low complexity). 2 positions are modified to phosphoserine: S196 and S203. A C2H2-type 1 zinc finger spans residues 244-267 (LTCEKCPRVFNTRWYLEKHMNVTH). The segment at 271–293 (QICDKCGKKFVLESELSLHQQTD) adopts a C2H2-type 2; degenerate zinc-finger fold. 6 C2H2-type zinc fingers span residues 298–321 (IQCV…KIVH), 328–350 (FACE…MVAH), 356–378 (FTCE…SLQH), 384–406 (FRCE…MSIH), 412–434 (FMCQ…MKTH), and 440–462 (FICE…RRTH). The segment at 468–491 (YPCDVCGQRFRFSNMLKAHKEKCF) adopts a C2H2-type 9; degenerate zinc-finger fold. Residues 497–608 (VNVPPAVQIP…KNSAAPAQHH (112 aa)) form a mediates interaction with CBFA2T3 region.

It belongs to the krueppel C2H2-type zinc-finger protein family. Interacts with CBFA2T3.

It localises to the nucleus. Its function is as follows. Functions as a transcriptional repressor. This is Zinc finger protein 652 (Znf652) from Mus musculus (Mouse).